The primary structure comprises 367 residues: Germination protease (367 aa).

Positions 1–15 (MKEPLDLSKYSVRTD) are excised as a propeptide.

It belongs to the peptidase A25 family. Homotetramer. Autoproteolytically processed. The inactive tetrameric zymogen termed p46 autoprocesses to a smaller form termed p41, which is active only during spore germination.

It carries out the reaction Endopeptidase action with P4 Glu or Asp, P1 preferably Glu &gt; Asp, P1' hydrophobic and P2' Ala.. Initiates the rapid degradation of small, acid-soluble proteins during spore germination. This is Germination protease from Bacillus thuringiensis subsp. konkukian (strain 97-27).